A 372-amino-acid polypeptide reads, in one-letter code: Cytochrome b (372 aa).

The next 4 helical transmembrane spans lie at 25–45, 69–90, 105–125, and 170–190; these read FGSMLLTCLILQITTGFFLAI, WIMQNLHAIGASMFFICIYIHI, WLSGTALLILLMATAFFGYVL, and FFALHFILPFTIISMSSIHII. 2 residues coordinate heme b: His-75 and His-89. Heme b is bound by residues His-174 and His-188. A ubiquinone is bound at residue His-193. The next 4 helical transmembrane spans lie at 218-238, 280-300, 312-332, and 339-358; these read YKDMLMITIMITFMLLILSFS, LGGTLALFMSIAILMTAPFTH, LTQTMFWILIATFITITWTAT, and FISISQVTSIIYFSFFIINP.

It belongs to the cytochrome b family. In terms of assembly, the cytochrome bc1 complex contains 3 respiratory subunits (MT-CYB, CYC1 and UQCRFS1), 2 core proteins (UQCRC1 and UQCRC2) and probably 6 low-molecular weight proteins. Heme b is required as a cofactor.

The protein resides in the mitochondrion inner membrane. In terms of biological role, component of the ubiquinol-cytochrome c reductase complex (complex III or cytochrome b-c1 complex) that is part of the mitochondrial respiratory chain. The b-c1 complex mediates electron transfer from ubiquinol to cytochrome c. Contributes to the generation of a proton gradient across the mitochondrial membrane that is then used for ATP synthesis. This is Cytochrome b (MT-CYB) from Dendroaspis polylepis polylepis (Black mamba).